The primary structure comprises 358 residues: Valine dehydrogenase (358 aa).

The active site involves Lys88. 188–194 (GVGKVGH) is an NAD(+) binding site.

Belongs to the Glu/Leu/Phe/Val dehydrogenases family. As to quaternary structure, homodimer.

It localises to the cytoplasm. It catalyses the reaction L-valine + NAD(+) + H2O = 3-methyl-2-oxobutanoate + NH4(+) + NADH + H(+). It participates in amino-acid degradation; L-valine degradation. In terms of biological role, oxidative deamination of branched-chain amino acids. The catabolism of valine is the major source of fatty acid precursors for macrolide biosynthesis and a vital source of antibiotic precursors. In Streptomyces virginiae (Streptomyces cinnamonensis), this protein is Valine dehydrogenase (vdh).